A 277-amino-acid chain; its full sequence is MIREPVVAGLFYPSRKDELIEQIRICFLDRRIGPGELPGPVEKNLQNPVGLVSPHAGYIYSGPVAAWGFLEVARIGKPSLVVIIGPNHTGLGKPVGIWPEGFWETPLGRVPVNEEAVEILLNSSRYAEEDTLSHLKEHSIEVQLPFLQFVFGDFSIVPVCLMDQSPTVAEDLAFAVRELMKSFRNVLIIASTDLNHYEDQKTTLKKDYLVVEAIEKRDSRLLYEYLVKEDISMCGYGGVAVLLNLGFSSVRILKHATSGDVSGDTLEVVGYLSAILS.

This sequence belongs to the MEMO1 family.

In Thermotoga neapolitana (strain ATCC 49049 / DSM 4359 / NBRC 107923 / NS-E), this protein is MEMO1 family protein CTN_0605.